We begin with the raw amino-acid sequence, 275 residues long: Gamma carbonic anhydrase 1, mitochondrial (275 aa).

Residues 1–43 constitute a mitochondrion transit peptide; that stretch reads MGTLGRAFYSVGFWIRETGQALDRLGCRLQGKNYFREQLSRHR. Residues 86–88 and 101–102 contribute to the substrate site; these read RGD and QD. Residues His107, His130, and His135 each contribute to the Zn(2+) site. Residue Asn209 participates in substrate binding. Residues 256–275 are disordered; that stretch reads LNLPNNILPDKETKRPSNVN. Positions 264–275 are enriched in basic and acidic residues; it reads PDKETKRPSNVN.

The protein belongs to the gamma-class carbonic anhydrase family. As to quaternary structure, homotrimer. Component of the mitochondrial oxidoreductase respiratory chain complex I; element of the extra matrix-exposed domain, which is attached to the membrane arm of this complex. Zn(2+) serves as cofactor.

It is found in the mitochondrion membrane. In terms of biological role, enzyme involved in the catabolism of H(2)CO(3) but that does not mediates the reversible hydration of carbon dioxide. Mediates complex I assembly in mitochondria and respiration. This is Gamma carbonic anhydrase 1, mitochondrial (GAMMACA1) from Arabidopsis thaliana (Mouse-ear cress).